The sequence spans 436 residues: Adenosylhomocysteinase (436 aa).

Thr-62, Asp-136, and Glu-161 together coordinate substrate. Residue 162–164 (TTT) coordinates NAD(+). Lys-191 and Asp-195 together coordinate substrate. NAD(+)-binding positions include Asn-196, 225–230 (GFGDVG), Glu-248, Asn-283, 304–306 (IGH), and Asn-352.

The protein belongs to the adenosylhomocysteinase family. Requires NAD(+) as cofactor.

It localises to the cytoplasm. The enzyme catalyses S-adenosyl-L-homocysteine + H2O = L-homocysteine + adenosine. Its pathway is amino-acid biosynthesis; L-homocysteine biosynthesis; L-homocysteine from S-adenosyl-L-homocysteine: step 1/1. In terms of biological role, may play a key role in the regulation of the intracellular concentration of adenosylhomocysteine. The protein is Adenosylhomocysteinase of Leptospira interrogans serogroup Icterohaemorrhagiae serovar copenhageni (strain Fiocruz L1-130).